Here is a 190-residue protein sequence, read N- to C-terminus: Recombination protein RecR (190 aa).

The segment at 58-73 adopts a C4-type zinc-finger fold; it reads CGQCGALSENELCEIC. Residues 81–167 enclose the Toprim domain; that stretch reads NILCIVESPK…TFSKIAQGIP (87 aa).

Belongs to the RecR family.

Functionally, may play a role in DNA repair. It seems to be involved in an RecBC-independent recombinational process of DNA repair. It may act with RecF and RecO. The chain is Recombination protein RecR from Campylobacter jejuni subsp. jejuni serotype O:6 (strain 81116 / NCTC 11828).